The sequence spans 623 residues: tRNA uridine 5-carboxymethylaminomethyl modification enzyme MnmG (623 aa).

Position 10–15 (10–15 (GGGHAG)) interacts with FAD. 269 to 283 (GPRYCPSIEDKIVRF) serves as a coordination point for NAD(+).

This sequence belongs to the MnmG family. As to quaternary structure, homodimer. Heterotetramer of two MnmE and two MnmG subunits. Requires FAD as cofactor.

It localises to the cytoplasm. NAD-binding protein involved in the addition of a carboxymethylaminomethyl (cmnm) group at the wobble position (U34) of certain tRNAs, forming tRNA-cmnm(5)s(2)U34. This is tRNA uridine 5-carboxymethylaminomethyl modification enzyme MnmG from Rhizobium meliloti (strain 1021) (Ensifer meliloti).